The sequence spans 502 residues: 4,4'-diapophytoene desaturase (4,4'-diaponeurosporene-forming) (502 aa).

5 to 17 (VIGAGVTGLAAAA) lines the FAD pocket.

It belongs to the carotenoid/retinoid oxidoreductase family. CrtN subfamily.

It catalyses the reaction 15-cis-4,4'-diapophytoene + 3 FAD + 3 H(+) = all-trans-4,4'-diaponeurosporene + 3 FADH2. Its pathway is carotenoid biosynthesis; staphyloxanthin biosynthesis; staphyloxanthin from farnesyl diphosphate: step 2/5. Its function is as follows. Involved in the biosynthesis of the yellow-orange carotenoid staphyloxanthin, which plays a role in the virulence via its protective function against oxidative stress. Catalyzes three successive dehydrogenation reactions that lead to the introduction of three double bonds into 4,4'-diapophytoene (dehydrosqualene), with 4,4'-diapophytofluene and 4,4'-diapo-zeta-carotene as intermediates, and 4,4'-diaponeurosporene (the major deep-yellow pigment in staphylococci strains) as the end product. This chain is 4,4'-diapophytoene desaturase (4,4'-diaponeurosporene-forming), found in Staphylococcus aureus (strain USA300).